A 675-amino-acid chain; its full sequence is DNA ligase (675 aa).

NAD(+) contacts are provided by residues 32–36, 81–82, and E113; these read DAEYD and SL. K115 acts as the N6-AMP-lysine intermediate in catalysis. Residues R136, E173, K291, and K315 each contribute to the NAD(+) site. Positions 409, 412, 427, and 433 each coordinate Zn(2+). Residues 595–675 form the BRCT domain; it reads SEKTYFFNKK…ELNSLIRIKE (81 aa).

Belongs to the NAD-dependent DNA ligase family. LigA subfamily. The cofactor is Mg(2+). It depends on Mn(2+) as a cofactor.

It carries out the reaction NAD(+) + (deoxyribonucleotide)n-3'-hydroxyl + 5'-phospho-(deoxyribonucleotide)m = (deoxyribonucleotide)n+m + AMP + beta-nicotinamide D-nucleotide.. Its function is as follows. DNA ligase that catalyzes the formation of phosphodiester linkages between 5'-phosphoryl and 3'-hydroxyl groups in double-stranded DNA using NAD as a coenzyme and as the energy source for the reaction. It is essential for DNA replication and repair of damaged DNA. This is DNA ligase from Buchnera aphidicola subsp. Acyrthosiphon pisum (strain 5A).